The following is a 338-amino-acid chain: Short-chain dehydrogenase/reductase phmF (338 aa).

Leu46, Arg71, Asp96, and Asn123 together coordinate NADP(+). Ser177 functions as the Proton donor in the catalytic mechanism. 2 residues coordinate NADP(+): Tyr211 and Lys215. Tyr211 serves as the catalytic Proton acceptor. The active-site Lowers pKa of active site Tyr is the Lys215.

Belongs to the short-chain dehydrogenases/reductases (SDR) family.

Its pathway is mycotoxin biosynthesis. Short-chain dehydrogenase/reductase; part of the gene cluster that mediates the biosynthesis of the mycotoxins phomacins, leucine-derived cytochalasans with potent actin polymerization-inhibitory activities and monocot-specific antigerminative activities. The first step in the pathway is catalyzed by the hybrid PKS-NRPS phmA, assisted by the enoyl reductase phmE, that are responsible for fusion of the leucine precursor and the polyketide backbone to produce a 2-pyrrolidone intermediate. The polyketide synthase module (PKS) of phmA is responsible for the synthesis of the polyketide backbone and the downstream nonribosomal peptide synthetase (NRPS) amidates the carboxyl end of the polyketide with the leucine precursor. Because phmA lacks a designated enoylreductase (ER) domain, the required activity is provided the enoyl reductase phmE. Reduction by the hydrolyase phmG, followed by dehydration and intra-molecular Diels-Alder cyclization by the Diels-Alderase phmD then yield the required isoindolone-fused macrocycle. A number of oxidative steps catalyzed by the tailoring cytochrome P450 monooxygenase phmB, the FAD-linked oxidoreductase phmC and the short-chain dehydrogenase/reductase phmF, are further required to afford the final products, phomacin D and phomacin E. This chain is Short-chain dehydrogenase/reductase phmF, found in Phaeosphaeria nodorum (strain SN15 / ATCC MYA-4574 / FGSC 10173) (Glume blotch fungus).